We begin with the raw amino-acid sequence, 282 residues long: NADPH-dependent 7-cyano-7-deazaguanine reductase (282 aa).

Residue 88-90 (IES) participates in substrate binding. Position 90–91 (90–91 (SK)) interacts with NADPH. Catalysis depends on Cys190, which acts as the Thioimide intermediate. The Proton donor role is filled by Asp197. A substrate-binding site is contributed by 229–230 (HE). 258–259 (RG) contacts NADPH.

This sequence belongs to the GTP cyclohydrolase I family. QueF type 2 subfamily. As to quaternary structure, homodimer.

Its subcellular location is the cytoplasm. The enzyme catalyses 7-aminomethyl-7-carbaguanine + 2 NADP(+) = 7-cyano-7-deazaguanine + 2 NADPH + 3 H(+). The protein operates within tRNA modification; tRNA-queuosine biosynthesis. Its function is as follows. Catalyzes the NADPH-dependent reduction of 7-cyano-7-deazaguanine (preQ0) to 7-aminomethyl-7-deazaguanine (preQ1). The sequence is that of NADPH-dependent 7-cyano-7-deazaguanine reductase from Escherichia coli O45:K1 (strain S88 / ExPEC).